A 432-amino-acid polypeptide reads, in one-letter code: MVNEQIIDISGPLKGEIEVPGDKSMTHRAIMLASLAEGVSTIYKPLLGEDCRRTMDIFRLLGVEIKEDDEKLVVTSPGYQSFNTPHQVLYTGNSGTTTRLLAGLLSGLGIESVLSGDVSIGKRPMDRVLRPLKLMDANIEGIEDNYTPLIIKPSVIKGINYQMEVASAQVKSAILFASLFSKEPTIIKELDVSRNHTETMFKHFNIPIEAEGLSINTTPEAIRYIKPADFHVPGDISSAAFFIVAALITPGSDVTIHNVGINPTRSGIIDIVEKMGGNIQLFNQTTGAEPTASIRIQYTPMLQPITIEGELVPKAIDELPVIALLCTQAVGTSTIKDAEELKVKETNRIDTTADMLNLLGFELQPTNDGLIIYPSEFKTNATVDSLTDHRIGMMLAVASLLSSEPVKIKQFDAVNVSFPGFLPKLKLLENEG.

3 residues coordinate 3-phosphoshikimate: K23, S24, and R28. K23 contacts phosphoenolpyruvate. 2 residues coordinate phosphoenolpyruvate: G95 and R123. S167, Q169, D317, and K344 together coordinate 3-phosphoshikimate. Q169 is a phosphoenolpyruvate binding site. D317 functions as the Proton acceptor in the catalytic mechanism. Phosphoenolpyruvate-binding residues include R348 and R390.

It belongs to the EPSP synthase family. Monomer.

It is found in the cytoplasm. It catalyses the reaction 3-phosphoshikimate + phosphoenolpyruvate = 5-O-(1-carboxyvinyl)-3-phosphoshikimate + phosphate. It functions in the pathway metabolic intermediate biosynthesis; chorismate biosynthesis; chorismate from D-erythrose 4-phosphate and phosphoenolpyruvate: step 6/7. Catalyzes the transfer of the enolpyruvyl moiety of phosphoenolpyruvate (PEP) to the 5-hydroxyl of shikimate-3-phosphate (S3P) to produce enolpyruvyl shikimate-3-phosphate and inorganic phosphate. This Staphylococcus aureus (strain COL) protein is 3-phosphoshikimate 1-carboxyvinyltransferase.